The following is a 183-amino-acid chain: CyanoP (183 aa).

Positions 1–19 (MLQRFFATALAIFVVLLGG) are cleaved as a signal peptide. A lipid anchor (N-palmitoyl cysteine) is attached at cysteine 20. Residue cysteine 20 is the site of S-diacylglycerol cysteine attachment. Residues aspartate 31, aspartate 34, aspartate 54, histidine 58, threonine 63, glutamate 87, aspartate 91, histidine 142, glutamate 163, and glutamate 164 each contribute to the Zn(2+) site.

Belongs to the PsbP family. CyanoP subfamily. Monomer. Present in very small amounts in PSII. Requires Zn(2+) as cofactor.

It is found in the cellular thylakoid membrane. Functionally, plays a role in the early stages of photosystem II (PSII) assembly; binds to D2 (psbD) and may facilitate its incorporation into PSII. Present in less than 1% of PSII preparations. The sequence is that of CyanoP from Thermosynechococcus vestitus (strain NIES-2133 / IAM M-273 / BP-1).